We begin with the raw amino-acid sequence, 358 residues long: MIEQQKRKGPELPLVPVKRQRHELLLGAAGSGPGAGQQQAAPGALLQAGPPRCSSLQAPIMLLSGHEGEVYCCKFHPNGSTLASAGFDRLILLWNVYGDCDNYATLKGHSGAVMELHYNTDGSMLFSASTDKTVAVWDSETGERVKRLKGHTSFVNSCYPARRGPQLVCTGSDDGTVKLWDIRKKAAIQTFQNTYQVLAVTFNDTSDQIISGGIDNDIKVWDLRQNKLTYTMRGHADSVTGLSLSSEGSYLLSNAMDNTVRVWDVRPFAPKERCVRIFQGNVHNFEKNLLRCSWSPDGSKIAAGSADRFVYVWDTTSRRILYKLPGHAGSINEVAFHPDEPIILSASSDKRLYMGEIQ.

K18 participates in a covalent cross-link: Glycyl lysine isopeptide (Lys-Gly) (interchain with G-Cter in SUMO2). At R21 the chain carries Asymmetric dimethylarginine. WD repeat units lie at residues 65-104 (GHEGEVYCCKFHPNGSTLASAGFDRLILLWNVYGDCDNYA), 108-147 (GHSGAVMELHYNTDGSMLFSASTDKTVAVWDSETGERVKR), 150-190 (GHTS…AIQT), 192-231 (QNTYQVLAVTFNDTSDQIISGGIDNDIKVWDLRQNKLTYT), 234-273 (GHADSVTGLSLSSEGSYLLSNAMDNTVRVWDVRPFAPKER), 284-323 (NFEKNLLRCSWSPDGSKIAAGSADRFVYVWDTTSRRILYK), and 326-358 (GHAGSINEVAFHPDEPIILSASSDKRLYMGEIQ). Residue K271 forms a Glycyl lysine isopeptide (Lys-Gly) (interchain with G-Cter in SUMO2) linkage.

Component of the pre-catalytic and catalytic spliceosome complexes. Component of the postcatalytic spliceosome P complex. Part of the U5 snRNP complex. Interacts with PRPF8. Component of the U4/U6-U5 tri-snRNP complex composed of the U4, U6 and U5 snRNAs and at least PRPF3, PRPF4, PRPF6, PRPF8, PRPF31, SNRNP200, TXNL4A, WDR57, SNRNP40, DDX23, CD2BP2, PPIH, SNU13, EFTUD2, SART1 and USP39. Component of the minor spliceosome, which splices U12-type introns.

The protein resides in the nucleus. Required for pre-mRNA splicing as component of the activated spliceosome. Component of the U5 small nuclear ribonucleoprotein (snRNP) complex and the U4/U6-U5 tri-snRNP complex, building blocks of the spliceosome. As a component of the minor spliceosome, involved in the splicing of U12-type introns in pre-mRNAs. This chain is U5 small nuclear ribonucleoprotein 40 kDa protein (SNRNP40), found in Bos taurus (Bovine).